The chain runs to 42 residues: Large ribosomal subunit protein eL32 (42 aa).

Belongs to the eukaryotic ribosomal protein eL32 family.

The protein is Large ribosomal subunit protein eL32 (RPL32) of Zea mays (Maize).